The chain runs to 399 residues: MDSHPYAWIEAALETVKRAHWYRSVQTIEGRPGAEVELAGQRVLNFASNDYLGLAGDQRLIRAAIQATEQLGTGSTGSRLLTGHRELHRQLERAIAQLKQTEDALVFSSGYLANLGTIAALVGPRDLILSDQYNHSSLKKGASLSGAKVLDYPHLDMGGLAELLQTHRSNYRRCLILTDTVFSMEGDVCPLPQLLAITTAHNAMVLVDEAHATGVLGATGAGAVEHWGCTDQTLIQVGTLSKALGSLGGYVAGTAVLIDFLRNRCPGWIYTTALSPADTAAALAAIAVVQSEPQRRIQLHENVQGVQAQLQNLPQLQEPRGRFRLLPSQSAILAVQMPDPATALEVGNALKQAGIFAPVIRPPTVPTSRLRLSLMATHTPDHCQRLGVAITTALARSLS.

Arginine 23 serves as a coordination point for substrate. 110-111 is a binding site for pyridoxal 5'-phosphate; that stretch reads GY. Substrate is bound at residue histidine 135. Residues serine 183, 208–211, and 239–242 each bind pyridoxal 5'-phosphate; these read DEAH and TLSK. N6-(pyridoxal phosphate)lysine is present on lysine 242. Residue threonine 364 participates in substrate binding.

This sequence belongs to the class-II pyridoxal-phosphate-dependent aminotransferase family. BioF subfamily. As to quaternary structure, homodimer. Pyridoxal 5'-phosphate is required as a cofactor.

It carries out the reaction 6-carboxyhexanoyl-[ACP] + L-alanine + H(+) = (8S)-8-amino-7-oxononanoate + holo-[ACP] + CO2. It functions in the pathway cofactor biosynthesis; biotin biosynthesis. Catalyzes the decarboxylative condensation of pimeloyl-[acyl-carrier protein] and L-alanine to produce 8-amino-7-oxononanoate (AON), [acyl-carrier protein], and carbon dioxide. This chain is Putative 8-amino-7-oxononanoate synthase (bioF), found in Cyanothece sp. (strain PCC 7425 / ATCC 29141).